The chain runs to 393 residues: F-box protein KIB4 (393 aa).

The region spanning 12-59 (AKQPILVLDLVRLVLERLSFVDFHRARCVSSVWYSASKSCIGGTNPTA) is the F-box domain.

The protein resides in the cytoplasm. It is found in the nucleus. The protein localises to the nucleolus. Component of SCF(ASK-cullin-F-box) E3 ubiquitin ligase complexes, which may mediate the ubiquitination and subsequent proteasomal degradation of target proteins. Required for brassinosteroid (BR) signal transduction. Mediates ASK7/BIN2/SK21 inactivation both by competing with substrate binding (e.g. BZR1) and by promoting its ubiquitination and subsequent proteasomal degradation. In Arabidopsis thaliana (Mouse-ear cress), this protein is F-box protein KIB4.